Consider the following 424-residue polypeptide: COUP transcription factor 1 (424 aa).

The interval 1 to 82 (MAMVVSSWRD…QGPPGSGQSQ (82 aa)) is disordered. Positions 39 to 68 (EQQQQQAGSGAPHTPQTPGQPGAPATPGTA) are enriched in low complexity. A DNA-binding region (nuclear receptor) is located at residues 84 to 159 (HIECVVCGDK…VGMRREAVQR (76 aa)). NR C4-type zinc fingers lie at residues 87–107 (CVVCGDKSSGKHYGQFTCEGC) and 123–147 (CRANRNCPIDQHHRNQCQYCRLKKC). One can recognise an NR LBD domain in the interval 185–411 (YLSGYISLLL…TLIRDMLLSG (227 aa)).

The protein belongs to the nuclear hormone receptor family. NR2 subfamily. In terms of assembly, binds DNA as dimer; homodimer and probable heterodimer with NR2F6. Interacts with GTF2B; this interaction is direct. Interacts with COPS2.

The protein resides in the nucleus. Its function is as follows. Coup (chicken ovalbumin upstream promoter) transcription factor binds to the ovalbumin promoter and, in conjunction with another protein (S300-II) stimulates initiation of transcription. Binds to both direct repeats and palindromes of the 5'-AGGTCA-3' motif. Represses transcriptional activity of LHCG. This is COUP transcription factor 1 (NR2F1) from Bos taurus (Bovine).